Reading from the N-terminus, the 842-residue chain is Unconventional myosin-Ia (842 aa).

The 686-residue stretch at Gly-1–Arg-686 folds into the Myosin motor domain. Gly-93–Thr-100 contacts ATP. Residues Val-563–Asp-585 form an actin-binding region. IQ domains follow at residues Leu-689–Met-712, Arg-713–Gly-733, and Ile-735–Arg-764.

It belongs to the TRAFAC class myosin-kinesin ATPase superfamily. Myosin family. Phosphorylated by ALPK1.

Its function is as follows. Involved in directing the movement of organelles along actin filaments. The protein is Unconventional myosin-Ia (Myo1a) of Rattus norvegicus (Rat).